The chain runs to 373 residues: Flagellar P-ring protein (373 aa).

A signal peptide spans 1–26 (MRLLFRFLTLVAVLAMSLADVAPAWA).

It belongs to the FlgI family. In terms of assembly, the basal body constitutes a major portion of the flagellar organelle and consists of four rings (L,P,S, and M) mounted on a central rod.

It is found in the periplasm. The protein resides in the bacterial flagellum basal body. Its function is as follows. Assembles around the rod to form the L-ring and probably protects the motor/basal body from shearing forces during rotation. The chain is Flagellar P-ring protein from Rhizobium etli (strain CIAT 652).